We begin with the raw amino-acid sequence, 91 residues long: Small ribosomal subunit protein bS20 (91 aa).

Residues 1-21 (MPLHKSAEKRLRQSARRNERN) are compositionally biased toward basic and acidic residues. Disordered regions lie at residues 1 to 25 (MPLH…RARK) and 70 to 91 (PNKA…MKAE). A compositionally biased stretch (basic residues) spans 70–79 (PNKASRKKSQ).

It belongs to the bacterial ribosomal protein bS20 family.

Functionally, binds directly to 16S ribosomal RNA. The chain is Small ribosomal subunit protein bS20 from Chlorobium phaeobacteroides (strain BS1).